A 400-amino-acid chain; its full sequence is Snake venom metalloproteinase H1 (400 aa).

The signal sequence occupies residues 1 to 6 (FPYQGS). A propeptide spanning residues 7 to 176 (SIILESGNVN…KKASQLIVST (170 aa)) is cleaved from the precursor. One can recognise a Peptidase M12B domain in the interval 180–377 (RYMEIVIVVD…ENPPCILNKP (198 aa)). Residues E183 and D267 each contribute to the Ca(2+) site. 3 disulfide bridges follow: C291/C372, C331/C356, and C333/C339. A Zn(2+)-binding site is contributed by H316. The active site involves E317. Zn(2+)-binding residues include H320 and H326. Ca(2+) is bound by residues C372, N375, V387, N390, L392, E394, and D400. The propeptide occupies 378 to 400 (LRTDTVSTPVSGNELLEAGKDYD).

The protein belongs to the venom metalloproteinase (M12B) family. P-I subfamily. In terms of assembly, monomer. The cofactor is Zn(2+). Expressed by the venom gland.

The protein resides in the secreted. In terms of biological role, snake venom metalloproteinase that impairs hemostasis in the envenomed animal. In Deinagkistrodon acutus (Hundred-pace snake), this protein is Snake venom metalloproteinase H1.